A 119-amino-acid polypeptide reads, in one-letter code: UPF0102 protein MS1289 (119 aa).

The protein belongs to the UPF0102 family.

In Mannheimia succiniciproducens (strain KCTC 0769BP / MBEL55E), this protein is UPF0102 protein MS1289.